We begin with the raw amino-acid sequence, 458 residues long: uncharacterized protein (458 aa).

The next 12 membrane-spanning stretches (helical) occupy residues 26–46 (LIAI…KSIH), 47–67 (FAGP…FLIM), 95–115 (AAFI…MADL), 125–145 (WLPG…LLIM), 160–180 (FALI…VMIF), 208–228 (GFIL…LVGL), 251–271 (VLLF…WDII), 278–298 (FVQV…NFVV), 342–362 (ALFF…IMPE), 365–385 (FTLI…ITVI), 409–429 (PFTN…LALA), and 432–452 (TRVS…IYKV).

The protein belongs to the amino acid-polyamine-organocation (APC) superfamily.

The protein resides in the cell membrane. Functionally, probable amino-acid or metabolite transport protein. This is an uncharacterized protein from Bacillus subtilis (strain 168).